The following is a 557-amino-acid chain: Urocanate hydratase (557 aa).

Residues 53 to 54 (GG), glutamine 131, 177 to 179 (GMG), 197 to 202 (ECQQSR), 243 to 244 (NA), 264 to 268 (QTSAH), 274 to 275 (YL), and 323 to 324 (YG) each bind NAD(+). Cysteine 411 is a catalytic residue. NAD(+) contacts are provided by residues 455–456 (RE) and glycine 493.

Homodimer. It depends on NAD(+) as a cofactor.

It localises to the cytoplasm. It carries out the reaction 4-imidazolone-5-propanoate = trans-urocanate + H2O. It functions in the pathway amino-acid degradation; L-histidine degradation into L-glutamate; N-formimidoyl-L-glutamate from L-histidine: step 2/3. Its function is as follows. Catalyzes the conversion of urocanate to 4-imidazolone-5-propionate. The sequence is that of Urocanate hydratase from Pseudomonas putida (Arthrobacter siderocapsulatus).